A 406-amino-acid chain; its full sequence is Probable delta-aminolevulinic acid dehydratase 2, chloroplastic (406 aa).

The N-terminal 34 residues, 1 to 34, are a transit peptide targeting the chloroplast; sequence MTSSMFRSPCKIPSVKGFEQKSYVGLKAASYNVR. Lysine 275 acts as the Schiff-base intermediate with substrate in catalysis. 5-aminolevulinate contacts are provided by arginine 285 and lysine 291. Glutamate 307 is a binding site for Mg(2+). Lysine 322 acts as the Schiff-base intermediate with substrate in catalysis. Residues serine 348 and tyrosine 387 each contribute to the 5-aminolevulinate site.

This sequence belongs to the ALAD family. In terms of assembly, homooctamer. Mg(2+) is required as a cofactor.

It is found in the plastid. The protein resides in the chloroplast. It carries out the reaction 2 5-aminolevulinate = porphobilinogen + 2 H2O + H(+). The protein operates within porphyrin-containing compound metabolism; protoporphyrin-IX biosynthesis; coproporphyrinogen-III from 5-aminolevulinate: step 1/4. It functions in the pathway porphyrin-containing compound metabolism; chlorophyll biosynthesis. Functionally, catalyzes an early step in the biosynthesis of tetrapyrroles. Binds two molecules of 5-aminolevulinate per subunit, each at a distinct site, and catalyzes their condensation to form porphobilinogen. In Arabidopsis thaliana (Mouse-ear cress), this protein is Probable delta-aminolevulinic acid dehydratase 2, chloroplastic (HEMB2).